The chain runs to 251 residues: Methylthioribulose-1-phosphate dehydratase (251 aa).

The disordered stretch occupies residues 1–26; sequence MTSVCDATNEDKENGSESTESQDKEH. Residues 9–26 show a composition bias toward basic and acidic residues; it reads NEDKENGSESTESQDKEH. Cys-100 provides a ligand contact to substrate. Residues His-118 and His-120 each contribute to the Zn(2+) site. The Proton donor/acceptor role is filled by Glu-142. His-198 lines the Zn(2+) pocket. The tract at residues 232-251 is disordered; the sequence is MDPSAPPIEENHYYDVQQSQ.

This sequence belongs to the aldolase class II family. MtnB subfamily. Zn(2+) is required as a cofactor.

The protein resides in the cytoplasm. It carries out the reaction 5-(methylsulfanyl)-D-ribulose 1-phosphate = 5-methylsulfanyl-2,3-dioxopentyl phosphate + H2O. Its pathway is amino-acid biosynthesis; L-methionine biosynthesis via salvage pathway; L-methionine from S-methyl-5-thio-alpha-D-ribose 1-phosphate: step 2/6. Catalyzes the dehydration of methylthioribulose-1-phosphate (MTRu-1-P) into 2,3-diketo-5-methylthiopentyl-1-phosphate (DK-MTP-1-P). Functions in the methionine salvage pathway. May play a role in apoptosis. The polypeptide is Methylthioribulose-1-phosphate dehydratase (Salmo salar (Atlantic salmon)).